The chain runs to 501 residues: Cytochrome P450 4c21 (501 aa).

Residues Glu309 and Cys447 each contribute to the heme site.

The protein belongs to the cytochrome P450 family. It depends on heme as a cofactor.

Its subcellular location is the endoplasmic reticulum membrane. It localises to the microsome membrane. It carries out the reaction an organic molecule + reduced [NADPH--hemoprotein reductase] + O2 = an alcohol + oxidized [NADPH--hemoprotein reductase] + H2O + H(+). The chain is Cytochrome P450 4c21 (CYP4C21) from Blattella germanica (German cockroach).